The chain runs to 158 residues: MNDLPFWKSKTLAEMSVPEWESLCDGCGLCCLNKIEEWDSGDIYFTSVSCKLLDGESCRCSSYENRWDFVPDCVQLTKENVPDIAWLPPTCGYRLVNEGRDLYWWHPLVSGDPETVHAAGISARGRSINENEIDLDDLEDYVVDWPLTVGEEKDDEDA.

It belongs to the UPF0260 family.

This Rhizobium johnstonii (strain DSM 114642 / LMG 32736 / 3841) (Rhizobium leguminosarum bv. viciae) protein is UPF0260 protein RL1394.